The chain runs to 183 residues: MIVGLIGVVEKISALEVHIEVQGVVYGVQVSMRTAALLEAGQKARLKILQVIKEDAHLLYGFLEEGEKILFERLLKINGVGGRIALAILSSFSPNEFESIIATKEVKRLQQVPGIGKKLADKIMVDLIGFFIQDENRPARNEVFLALESLGFKSAEINQVLKTLKPNLSIEAAIKEALQQLRS.

Positions 1-63 are domain I; the sequence is MIVGLIGVVE…EDAHLLYGFL (63 aa). The tract at residues 64-139 is domain II; the sequence is EEGEKILFER…FFIQDENRPA (76 aa). Residue Ala-139 is a region of interest, flexible linker. Residues 139-183 are domain III; it reads ARNEVFLALESLGFKSAEINQVLKTLKPNLSIEAAIKEALQQLRS.

Belongs to the RuvA family. In terms of assembly, homotetramer. Forms an RuvA(8)-RuvB(12)-Holliday junction (HJ) complex. HJ DNA is sandwiched between 2 RuvA tetramers; dsDNA enters through RuvA and exits via RuvB. An RuvB hexamer assembles on each DNA strand where it exits the tetramer. Each RuvB hexamer is contacted by two RuvA subunits (via domain III) on 2 adjacent RuvB subunits; this complex drives branch migration. In the full resolvosome a probable DNA-RuvA(4)-RuvB(12)-RuvC(2) complex forms which resolves the HJ.

The protein resides in the cytoplasm. The RuvA-RuvB-RuvC complex processes Holliday junction (HJ) DNA during genetic recombination and DNA repair, while the RuvA-RuvB complex plays an important role in the rescue of blocked DNA replication forks via replication fork reversal (RFR). RuvA specifically binds to HJ cruciform DNA, conferring on it an open structure. The RuvB hexamer acts as an ATP-dependent pump, pulling dsDNA into and through the RuvAB complex. HJ branch migration allows RuvC to scan DNA until it finds its consensus sequence, where it cleaves and resolves the cruciform DNA. The sequence is that of Holliday junction branch migration complex subunit RuvA from Helicobacter pylori (strain ATCC 700392 / 26695) (Campylobacter pylori).